The chain runs to 186 residues: Ribosome maturation factor RimP (186 aa).

It belongs to the RimP family.

It is found in the cytoplasm. Its function is as follows. Required for maturation of 30S ribosomal subunits. This is Ribosome maturation factor RimP from Rhizorhabdus wittichii (strain DSM 6014 / CCUG 31198 / JCM 15750 / NBRC 105917 / EY 4224 / RW1) (Sphingomonas wittichii).